A 328-amino-acid polypeptide reads, in one-letter code: Cytochrome c biogenesis protein CcsA (328 aa).

8 helical membrane passes run 13–33 (ISFS…LVNL), 46–66 (GIII…IYSG), 73–93 (LYES…VSYF), 101–121 (LNAI…SGLL), 146–166 (MILG…LLVI), 234–254 (IISL…VWAN), 263–283 (WDPK…YLHI), and 295–315 (AIVA…VILL).

The protein belongs to the CcmF/CycK/Ccl1/NrfE/CcsA family. In terms of assembly, may interact with Ccs1.

The protein localises to the plastid. It localises to the chloroplast thylakoid membrane. Required during biogenesis of c-type cytochromes (cytochrome c6 and cytochrome f) at the step of heme attachment. This Crucihimalaya wallichii (Rock-cress) protein is Cytochrome c biogenesis protein CcsA.